A 164-amino-acid polypeptide reads, in one-letter code: HTH-type transcriptional regulator IscR (164 aa).

Residues 2–131 form the HTH rrf2-type domain; sequence RLTSKGRYAV…NNITLAELVN (130 aa). Positions 28–51 form a DNA-binding region, H-T-H motif; that stretch reads LADISERQGISLSYLEQLFSRLRK. 3 residues coordinate [2Fe-2S] cluster: Cys92, Cys98, and Cys104. Positions 92, 98, and 104 each coordinate a metal cation. The interval 145 to 164 is disordered; it reads DTRRTANGRPQETINVNLRA. Residues 152-164 show a composition bias toward polar residues; sequence GRPQETINVNLRA.

It depends on [2Fe-2S] cluster as a cofactor.

Its function is as follows. Regulates the transcription of several operons and genes involved in the biogenesis of Fe-S clusters and Fe-S-containing proteins. The sequence is that of HTH-type transcriptional regulator IscR from Serratia proteamaculans (strain 568).